The chain runs to 466 residues: Coagulation factor IX (466 aa).

An N-terminal signal peptide occupies residues 1–25 (MRCLNMIMAEPPGLITICLLGYLLG). Residues 26 to 46 (ADCTVFLDHEDATKVLSRPKR) constitute a propeptide that is removed on maturation. Residues tyrosine 47, asparagine 48, glutamate 53, glutamate 54, glutamate 61, glutamate 63, glutamate 66, glutamate 67, glutamate 72, glutamate 73, and glutamate 76 each coordinate Ca(2+). In terms of domain architecture, Gla spans 47-92 (YNSGKLEEFVQGNLERECMEEKCSFEEAREVFENTEKTTEFWKQYV). A 4-carboxyglutamate mark is found at glutamate 53, glutamate 54, glutamate 61, glutamate 63, glutamate 66, glutamate 67, glutamate 72, glutamate 73, glutamate 76, glutamate 79, and glutamate 82. Residue glutamate 61 participates in Mg(2+) binding. A disulfide bond links cysteine 64 and cysteine 69. Position 66 (glutamate 66) interacts with Mg(2+). Residue glutamate 72 participates in Mg(2+) binding. Glutamate 76 lines the Mg(2+) pocket. Glutamate 82 is a binding site for Ca(2+). Glutamate 82 contributes to the Mg(2+) binding site. O-linked (GalNAc...) threonine glycosylation occurs at threonine 85. Glutamate 86, aspartate 93, glycine 94, and glutamine 96 together coordinate Ca(2+). Glutamate 86 carries the 4-carboxyglutamate modification. Position 86 (glutamate 86) interacts with Mg(2+). In terms of domain architecture, EGF-like 1; calcium-binding spans 93–129 (DGDQCESNPCLNGGICKDDINSYECWCQTGFEGKNCE). Disulfide bonds link cysteine 97/cysteine 108, cysteine 102/cysteine 117, cysteine 119/cysteine 128, cysteine 134/cysteine 145, cysteine 141/cysteine 155, cysteine 157/cysteine 170, cysteine 178/cysteine 340, cysteine 257/cysteine 273, cysteine 387/cysteine 401, and cysteine 412/cysteine 440. Serine 99 is a glycosylation site (O-linked (Glc...) serine). The Ca(2+) site is built by aspartate 110 and aspartate 111. Position 110 is a (3R)-3-hydroxyaspartate (aspartate 110). Serine 114 is modified (phosphoserine). In terms of domain architecture, EGF-like 2 spans 130–171 (LDVTCNIKNGRCKQFCKLDADNKVVCSCTTGYQLAEDQKSCE). The propeptide at 193–231 (AETLFLNMDYENSTTDYENSAEAEKNVDNVTQPLNDLTR) is activation peptide. Tyrosine 202 carries the post-translational modification Sulfotyrosine. Position 205 is a phosphoserine (serine 205). The residue at position 206 (threonine 206) is a Phosphothreonine; alternate. Residue threonine 206 is glycosylated (O-linked (GalNAc...) threonine; alternate). Asparagine 221 carries N-linked (GlcNAc...) asparagine glycosylation. O-linked (GalNAc...) threonine glycans are attached at residues threonine 223 and threonine 230. Residues 232 to 464 (IVGGKTAKPG…YVNWIKEKTK (233 aa)) enclose the Peptidase S1 domain. The active-site Charge relay system is the histidine 272. Ca(2+)-binding residues include glutamate 286, asparagine 288, glutamate 291, glutamate 293, and glutamate 296. Aspartate 320 serves as the catalytic Charge relay system. Serine 416 serves as the catalytic Charge relay system.

It belongs to the peptidase S1 family. In terms of assembly, heterodimer of a light chain and a heavy chain; disulfide-linked. Interacts (inactive and activated) with F11 (activated) in calcium-dependent manner. Interacts with SERPINC1. In terms of processing, the iron and 2-oxoglutarate dependent 3-hydroxylation of aspartate and asparagine is (R) stereospecific within EGF domains. Post-translationally, activated by factor XIa, which excises the activation peptide. The propeptide can also be removed by snake venom protease. Activated by coagulation factor VIIa-tissue factor (F7-F3) complex in calcium-dependent manner. Predominantly O-glucosylated at Ser-99 by POGLUT1 in vitro.

It localises to the secreted. The catalysed reaction is Selective cleavage of Arg-|-Ile bond in factor X to form factor Xa.. Its function is as follows. Factor IX is a vitamin K-dependent plasma protein that participates in the intrinsic pathway of blood coagulation by converting factor X to its active form in the presence of Ca(2+) ions, phospholipids, and factor VIIIa. In Felis catus (Cat), this protein is Coagulation factor IX (F9).